The sequence spans 252 residues: Protein BTG3 (252 aa).

Positions 138-165 (VTSDYHSGSSSSDEETSKEVEVKPNSVT) are disordered.

It belongs to the BTG family.

Overexpression impairs serum-induced cell cycle progression from the G0/G1 to S phase. The polypeptide is Protein BTG3 (BTG3) (Sus scrofa (Pig)).